Here is a 203-residue protein sequence, read N- to C-terminus: Protein GrpE (203 aa).

Over residues 1-20 (MSDNGDNNTKSPQHNNPQPN) the composition is skewed to polar residues. The tract at residues 1–46 (MSDNGDNNTKSPQHNNPQPNEKSDGKVQPGQPQVNPQRKFTAGINK) is disordered.

It belongs to the GrpE family. Homodimer.

It localises to the cytoplasm. Functionally, participates actively in the response to hyperosmotic and heat shock by preventing the aggregation of stress-denatured proteins, in association with DnaK and GrpE. It is the nucleotide exchange factor for DnaK and may function as a thermosensor. Unfolded proteins bind initially to DnaJ; upon interaction with the DnaJ-bound protein, DnaK hydrolyzes its bound ATP, resulting in the formation of a stable complex. GrpE releases ADP from DnaK; ATP binding to DnaK triggers the release of the substrate protein, thus completing the reaction cycle. Several rounds of ATP-dependent interactions between DnaJ, DnaK and GrpE are required for fully efficient folding. This Ehrlichia chaffeensis (strain ATCC CRL-10679 / Arkansas) protein is Protein GrpE.